A 141-amino-acid polypeptide reads, in one-letter code: MGLRSCTHLATLFMTLWALAFCFLVVVPIPAQTTSLQNAKDDRRLQELESKIGAESDQPNANLVGPSFSRFGDRRNQKTISFGRRVPLISRPMIPIELDLLMDNDDERTKAKRFDDYGHMRFGKRGGDDQFDDYGHMRFGR.

The N-terminal stretch at 1 to 33 (MGLRSCTHLATLFMTLWALAFCFLVVVPIPAQT) is a signal peptide. The propeptide occupies 34 to 73 (TSLQNAKDDRRLQELESKIGAESDQPNANLVGPSFSRFGD). The disordered stretch occupies residues 51–72 (KIGAESDQPNANLVGPSFSRFG). Phe-82 is modified (phenylalanine amide). The propeptide occupies 86 to 111 (VPLISRPMIPIELDLLMDNDDERTKA). Tyr-117 bears the Sulfotyrosine mark. Phe-122 bears the Phenylalanine amide mark. Tyr-134 carries the sulfotyrosine modification. Residue Phe-139 is modified to Phenylalanine amide.

Belongs to the gastrin/cholecystokinin family.

Its subcellular location is the secreted. In terms of biological role, drosulfakinin-0 (DSK 0) plays diverse biological roles including regulating gut muscle contraction in adults but not in larvae. The protein is Drosulfakinins of Drosophila mauritiana (Fruit fly).